The sequence spans 1336 residues: Immunoglobulin superfamily member 1 (1336 aa).

The N-terminal stretch at methionine 1–glycine 28 is a signal peptide. Topologically, residues methionine 29 to asparagine 518 are extracellular. Ig-like C2-type domains are found at residues proline 38–glutamate 122, glutamine 137–alanine 222, proline 226–leucine 312, proline 321–asparagine 408, and proline 419–glutamate 500. Asparagine 53 carries N-linked (GlcNAc...) asparagine glycosylation. An intrachain disulfide couples cysteine 58 to cysteine 106. Cysteine 248 and cysteine 296 are joined by a disulfide. 3 N-linked (GlcNAc...) asparagine glycosylation sites follow: asparagine 338, asparagine 374, and asparagine 381. 2 disulfides stabilise this stretch: cysteine 343–cysteine 392 and cysteine 441–cysteine 484. The helical transmembrane segment at glutamate 519 to isoleucine 539 threads the bilayer. Over arginine 540 to glycine 559 the chain is Cytoplasmic. Residues valine 560 to isoleucine 580 traverse the membrane as a helical segment. Topologically, residues glutamate 581–isoleucine 1336 are extracellular. Ig-like C2-type domains lie at threonine 589–leucine 677, proline 686–lysine 760, proline 777–threonine 869, proline 873–methionine 958, threonine 965–valine 1060, proline 1065–aspartate 1150, and proline 1161–aspartate 1242. Residues asparagine 607, asparagine 747, asparagine 798, asparagine 846, asparagine 939, asparagine 986, asparagine 1027, and asparagine 1082 are each glycosylated (N-linked (GlcNAc...) asparagine). A disulfide bond links cysteine 703 and cysteine 750. Intrachain disulfides connect cysteine 799/cysteine 849 and cysteine 895/cysteine 942. A disulfide bond links cysteine 1087 and cysteine 1134. Asparagine 1147 and asparagine 1223 each carry an N-linked (GlcNAc...) asparagine glycan. Residues cysteine 1183 and cysteine 1226 are joined by a disulfide bond. The segment at cysteine 1308–isoleucine 1336 is disordered. Positions proline 1317–isoleucine 1328 are enriched in polar residues.

Interacts with INHA. In PubMed:12385827 does not interact with INHA; standard receptor binding assay. Interacts with ACVR1B; the interaction appears to be ligand-dependent as it is diminished by inhibin B and activin A. Interacts with ACVR2A, ACVR2B, ACVRL1 and BMPR1B. Interacts with HECTD1. Highly expressed in pancreas, testis and fetal liver. Moderately expressed in heart, prostate and small intestine. Expressed at very low levels in brain, thymus, ovary, colon, fetal lung and fetal kidney. Expressed in muscle. Isoform 3 is expressed in pituitary gland.

The protein localises to the membrane. The protein resides in the secreted. Its function is as follows. Seems to be a coreceptor in inhibin signaling, but seems not to be a high-affinity inhibin receptor. Antagonizes activin A signaling in the presence or absence of inhibin B. Necessary to mediate a specific antagonistic effect of inhibin B on activin-stimulated transcription. In Homo sapiens (Human), this protein is Immunoglobulin superfamily member 1 (IGSF1).